We begin with the raw amino-acid sequence, 602 residues long: Sodium- and chloride-dependent GABA transporter 2 (602 aa).

Residues Met1 to Glu40 lie on the Cytoplasmic side of the membrane. A run of 3 helical transmembrane segments spans residues Phe41 to Leu61, Gly68 to Leu88, and Ile121 to Phe141. Topologically, residues Ser142–Trp206 are extracellular. The cysteines at positions 153 and 162 are disulfide-linked. Asn169 and Asn173 each carry an N-linked (GlcNAc...) asparagine glycan. 2 helical membrane passes run Glu207 to Val227 and Val233 to Val253. The N-linked (GlcNAc...) asparagine glycan is linked to Asn269. A run of 7 helical transmembrane segments spans residues Ala282–Ser302, Phe319–Met339, Val366–Leu386, Val418–Gly438, Gly453–Ala473, Pro490–Phe510, and Trp528–Trp548. The Cytoplasmic portion of the chain corresponds to Ser549 to His602. Thr587 carries the phosphothreonine modification. Phosphoserine is present on Ser591.

This sequence belongs to the sodium:neurotransmitter symporter (SNF) (TC 2.A.22) family. SLC6A13 subfamily.

It localises to the cell membrane. It is found in the basolateral cell membrane. It catalyses the reaction 4-aminobutanoate(out) + chloride(out) + 2 Na(+)(out) = 4-aminobutanoate(in) + chloride(in) + 2 Na(+)(in). The catalysed reaction is taurine(out) + chloride(out) + 2 Na(+)(out) = taurine(in) + chloride(in) + 2 Na(+)(in). The enzyme catalyses beta-alanine(out) + chloride(out) + 2 Na(+)(out) = beta-alanine(in) + chloride(in) + 2 Na(+)(in). It carries out the reaction hypotaurine(out) + chloride(out) + 2 Na(+)(out) = hypotaurine(in) + chloride(in) + 2 Na(+)(in). Its function is as follows. Mediates sodium- and chloride-dependent transport of gamma-aminobutyric acid (GABA). Can also mediate transport of beta-alanine, taurine and hypotaurine. The chain is Sodium- and chloride-dependent GABA transporter 2 (SLC6A13) from Bos taurus (Bovine).